We begin with the raw amino-acid sequence, 764 residues long: Cyclin-F (764 aa).

A Nuclear localization signal 1 motif is present at residues 19-27 (RKRVRKRAS). Residues 28 to 75 (AVSLLSLPEELLVFVLQCLSAEDLLSVRAVHSHLCDIIDTNASIWARV) form the F-box domain. Positions 307–404 (TKRYILVDWL…EVISVLDGKI (98 aa)) constitute a Cyclin N-terminal domain. Residues 309 to 312 (RYIL) carry the D box 1 motif. Residues 570-575 (SSKRRR) carry the Nuclear localization signal 2 motif. Residues 583-738 (RGAFVATPTA…PSQRIRRQVK (156 aa)) are PEST. Residues 662–754 (CEEDEQEPPT…HSAGEAEQED (93 aa)) are disordered. The span at 682–692 (SSSSTSSSSSS) shows a compositional bias: low complexity. Residues 702–722 (SGYSSIQSFPSPTGSSALVSP) are compositionally biased toward polar residues. The span at 732–742 (RIRRQVKRKNT) shows a compositional bias: basic residues.

Belongs to the cyclin family. Cyclin AB subfamily. Component of the SCF(CCNF) complex. In terms of tissue distribution, expressed in the brain.

The protein localises to the nucleus. The protein resides in the cytoplasm. Its subcellular location is the perinuclear region. It localises to the cytoskeleton. It is found in the microtubule organizing center. The protein localises to the centrosome. The protein resides in the centriole. Its function is as follows. Substrate recognition component of a SCF (SKP1-CUL1-F-box protein) E3 ubiquitin-protein ligase complex which mediates the ubiquitination and subsequent proteasomal degradation of target proteins. The SCF(CCNF) E3 ubiquitin-protein ligase complex is an integral component of the ubiquitin proteasome system (UPS) and links proteasome degradation to the cell cycle. Mediates the substrate recognition and the proteasomal degradation of various target proteins during G2 phase involved in the regulation of cell cycle progression and in the maintenance of genome stability. May play a role in motor neuron development and axonal outgrowth. The chain is Cyclin-F (ccnf) from Danio rerio (Zebrafish).